The primary structure comprises 278 residues: NAD kinase (278 aa).

Asp56 serves as the catalytic Proton acceptor. Residues 56 to 57, 132 to 133, Arg158, Asp160, and 171 to 176 each bind NAD(+); these read DG, NE, and TAYNKS.

This sequence belongs to the NAD kinase family. The cofactor is a divalent metal cation.

Its subcellular location is the cytoplasm. The enzyme catalyses NAD(+) + ATP = ADP + NADP(+) + H(+). Functionally, involved in the regulation of the intracellular balance of NAD and NADP, and is a key enzyme in the biosynthesis of NADP. Catalyzes specifically the phosphorylation on 2'-hydroxyl of the adenosine moiety of NAD to yield NADP. This is NAD kinase from Streptococcus pyogenes serotype M1.